Consider the following 339-residue polypeptide: Ketol-acid reductoisomerase (NADP(+)) (339 aa).

One can recognise a KARI N-terminal Rossmann domain in the interval 1–182 (MRVYYDRDAD…GGGRAGIIET (182 aa)). NADP(+)-binding positions include 24–27 (YGSQ), Arg48, Ser51, Ser53, and 83–86 (DELQ). Residue His108 is part of the active site. Gly134 contacts NADP(+). A KARI C-terminal knotted domain is found at 183 to 328 (TFREECETDL…AKLRDMMPWI (146 aa)). Mg(2+) is bound by residues Asp191, Glu195, Glu227, and Glu231. Ser252 is a binding site for substrate.

Belongs to the ketol-acid reductoisomerase family. Requires Mg(2+) as cofactor.

It catalyses the reaction (2R)-2,3-dihydroxy-3-methylbutanoate + NADP(+) = (2S)-2-acetolactate + NADPH + H(+). It carries out the reaction (2R,3R)-2,3-dihydroxy-3-methylpentanoate + NADP(+) = (S)-2-ethyl-2-hydroxy-3-oxobutanoate + NADPH + H(+). Its pathway is amino-acid biosynthesis; L-isoleucine biosynthesis; L-isoleucine from 2-oxobutanoate: step 2/4. It functions in the pathway amino-acid biosynthesis; L-valine biosynthesis; L-valine from pyruvate: step 2/4. Functionally, involved in the biosynthesis of branched-chain amino acids (BCAA). Catalyzes an alkyl-migration followed by a ketol-acid reduction of (S)-2-acetolactate (S2AL) to yield (R)-2,3-dihydroxy-isovalerate. In the isomerase reaction, S2AL is rearranged via a Mg-dependent methyl migration to produce 3-hydroxy-3-methyl-2-ketobutyrate (HMKB). In the reductase reaction, this 2-ketoacid undergoes a metal-dependent reduction by NADPH to yield (R)-2,3-dihydroxy-isovalerate. The protein is Ketol-acid reductoisomerase (NADP(+)) of Rhodopseudomonas palustris (strain ATCC BAA-98 / CGA009).